Reading from the N-terminus, the 156-residue chain is Ecotin (156 aa).

Residues 1 to 19 (MKALLIAAGVAALSSTAMA) form the signal peptide. A disulfide bridge links C65 with C102.

It belongs to the protease inhibitor I11 (ecotin) family. In terms of assembly, homodimer.

The protein resides in the periplasm. Functionally, general inhibitor of family S1 serine proteases. The chain is Ecotin from Pseudomonas aeruginosa (strain LESB58).